A 263-amino-acid polypeptide reads, in one-letter code: Cytochrome c oxidase subunit 3 (263 aa).

The next 7 membrane-spanning stretches (helical) occupy residues 9-29, 40-60, 84-104, 129-149, 161-181, 198-218, and 241-261; these read PFHM…AMIL, FNMN…IQWW, GMIL…WAFF, IQIP…ITWA, ALQG…LQMY, TFFV…TFLL, and AWYW…IYWW.

The protein belongs to the cytochrome c oxidase subunit 3 family. Component of the cytochrome c oxidase (complex IV, CIV), a multisubunit enzyme composed of a catalytic core of 3 subunits and several supernumerary subunits. The complex exists as a monomer or a dimer and forms supercomplexes (SCs) in the inner mitochondrial membrane with ubiquinol-cytochrome c oxidoreductase (cytochrome b-c1 complex, complex III, CIII).

Its subcellular location is the mitochondrion inner membrane. It catalyses the reaction 4 Fe(II)-[cytochrome c] + O2 + 8 H(+)(in) = 4 Fe(III)-[cytochrome c] + 2 H2O + 4 H(+)(out). Functionally, component of the cytochrome c oxidase, the last enzyme in the mitochondrial electron transport chain which drives oxidative phosphorylation. The respiratory chain contains 3 multisubunit complexes succinate dehydrogenase (complex II, CII), ubiquinol-cytochrome c oxidoreductase (cytochrome b-c1 complex, complex III, CIII) and cytochrome c oxidase (complex IV, CIV), that cooperate to transfer electrons derived from NADH and succinate to molecular oxygen, creating an electrochemical gradient over the inner membrane that drives transmembrane transport and the ATP synthase. Cytochrome c oxidase is the component of the respiratory chain that catalyzes the reduction of oxygen to water. Electrons originating from reduced cytochrome c in the intermembrane space (IMS) are transferred via the dinuclear copper A center (CU(A)) of subunit 2 and heme A of subunit 1 to the active site in subunit 1, a binuclear center (BNC) formed by heme A3 and copper B (CU(B)). The BNC reduces molecular oxygen to 2 water molecules using 4 electrons from cytochrome c in the IMS and 4 protons from the mitochondrial matrix. The sequence is that of Cytochrome c oxidase subunit 3 (COIII) from Locusta migratoria (Migratory locust).